Reading from the N-terminus, the 99-residue chain is Large ribosomal subunit protein bL21 (99 aa).

The protein belongs to the bacterial ribosomal protein bL21 family. In terms of assembly, part of the 50S ribosomal subunit. Contacts protein L20.

Functionally, this protein binds to 23S rRNA in the presence of protein L20. The chain is Large ribosomal subunit protein bL21 from Mesoplasma florum (strain ATCC 33453 / NBRC 100688 / NCTC 11704 / L1) (Acholeplasma florum).